The following is a 480-amino-acid chain: Speriolin (480 aa).

The interval 1-76 (MSLLTSYEGL…HQGVFLPPAS (76 aa)) is necessary for targeting to centrosomes. A coiled-coil region spans residues 2 to 45 (SLLTSYEGLRHQIERLVRENEELKKLVRLIRENQELKSAIKTQA). Disordered regions lie at residues 252 to 297 (INNI…SRVM) and 305 to 324 (VEME…DNPR).

It belongs to the speriolin family. In terms of assembly, found in a complex with CDC20, CDC27 and TUBG1. Interacts with CDC20. Expressed in testis. Expressed in pachyten spermatocytes, spermatids and epididymal sperm (at protein level).

The protein resides in the cytoplasm. It localises to the cytoskeleton. The protein localises to the microtubule organizing center. It is found in the centrosome. The chain is Speriolin (Spatc1) from Mus musculus (Mouse).